Consider the following 195-residue polypeptide: Heat shock protein beta-8 (195 aa).

Residue serine 56 is modified to Phosphoserine. Threonine 62 is subject to Phosphothreonine. An asymmetric dimethylarginine mark is found at arginine 70 and arginine 77. The sHSP domain maps to threonine 73–glutamate 184. The tract at residues threonine 175–threonine 195 is disordered. A compositionally biased stretch (polar residues) spans phenylalanine 176–threonine 195.

This sequence belongs to the small heat shock protein (HSP20) family. In terms of assembly, monomer. Forms a ternary complex with BAG3 and HSPA1A. Component of the chaperone-assisted selective autophagy (CASA) complex consisting of BAG3, HSPA8/HSC70, HSPB8 and STUB1/CHIP. Interacts with HSPB1. Interacts with DNAJB6. Interacts with BAG3. In terms of processing, phosphorylated.

The protein localises to the cytoplasm. It is found in the nucleus. Its function is as follows. Involved in the chaperone-assisted selective autophagy (CASA), a crucial process for protein quality control, particularly in mechanical strained cells and tissues such as muscle. Displays temperature-dependent chaperone activity. This Macaca mulatta (Rhesus macaque) protein is Heat shock protein beta-8 (HSPB8).